We begin with the raw amino-acid sequence, 410 residues long: Transposase for insertion sequence element IS801 (410 aa).

It belongs to the transposase 32 family.

Involved in the transposition of the insertion sequence. This chain is Transposase for insertion sequence element IS801, found in Pseudomonas savastanoi pv. phaseolicola (Pseudomonas syringae pv. phaseolicola).